A 262-amino-acid polypeptide reads, in one-letter code: Putative ankyrin repeat protein FPV243 (262 aa).

The ANK repeat unit spans residues 25 to 54 (YGSTPLFEAICNCSCKNVKLFLENNADINE).

This chain is Putative ankyrin repeat protein FPV243, found in Vertebrata (FPV).